Consider the following 356-residue polypeptide: MTAQPLKAALPLLFVALSGVLGTPVISCINEDGKAVDWFAFYKLPRRTSRGGTGMGLDYLYLDSTMRTWSKSHHLINSSRSSLGRTLEQLYEAHNAKNDTAYLIYNDAVPASVNYSGNYGHAKGLLVWNRVQGFWLIHSIPKFPPVPEKGYEYPSSGRQYAQSGLCITLKYSQYETIDSQLLVFQPNIYSCFIPNIFRWELIHMPQMCAKSSASKIPSRRLTVLQSAQGLNFLHFAKSTFYTDDIFAAWIAQKLKVHLLVESWQRKNHELPSNCSLPYHVYNIKAIRGPLQSDFPSHHDHSKWCVSTKDSQARWTCIGDLNRSPHQALRSGGFICSKNRYIYQSFDRLVSHYASCN.

An N-terminal signal peptide occupies residues 1–22 (MTAQPLKAALPLLFVALSGVLG). N-linked (GlcNAc...) asparagine glycans are attached at residues N77, N98, N114, and N273.

Belongs to the DNase II family. Liver specific.

The protein localises to the lysosome. It catalyses the reaction Endonucleolytic cleavage to nucleoside 3'-phosphates and 3'-phosphooligonucleotide end-products.. Functionally, hydrolyzes DNA under acidic conditions. Does not require divalent cations for activity. Participates in the degradation of nuclear DNA during lens cell differentiation. The polypeptide is Deoxyribonuclease-2-beta (Dnase2b) (Rattus norvegicus (Rat)).